The sequence spans 726 residues: A-type inclusion protein A25 homolog (726 aa).

The interval 342–361 (TNTGIEEPHATGGDKEDQPI) is disordered. The span at 347-360 (EEPHATGGDKEDQP) shows a compositional bias: basic and acidic residues. Tandem repeats lie at residues 612 to 634 (RELEEERRRVKDLESRLDECTRN), 639 to 661 (QEVDALRSRIRELENKLTDCIES), 667 to 689 (TEISRLQSRISDLERQLNECRGN), and 691 to 713 (TEISRLESRISDLERQLNDCRRN). Positions 612–713 (RELEEERRRV…ERQLNDCRRN (102 aa)) are 4 X approximate tandem repeats.

Belongs to the poxviridae A25 protein family. As to quaternary structure, interacts (via N-terminus) with protein A26.

It localises to the virion. Its function is as follows. Structural protein that forms a matrix surrounding the mature virion (MV) through interaction with protein A26. Presence of protein A25 in the virion structurally prevents direct virus-cell fusion mechanism. This chain is A-type inclusion protein A25 homolog, found in Camelus.